We begin with the raw amino-acid sequence, 62 residues long: UPF0434 protein Rpic_2808 (62 aa).

Belongs to the UPF0434 family.

In Ralstonia pickettii (strain 12J), this protein is UPF0434 protein Rpic_2808.